The chain runs to 349 residues: Probable arabinogalactan endo-beta-1,4-galactanase A (349 aa).

Residues 1-15 (MLLSFLPLLPLATAA) form the signal peptide. The N-linked (GlcNAc...) asparagine glycan is linked to N126. E150 (proton donor) is an active-site residue. The active-site Nucleophile is the E261.

The protein belongs to the glycosyl hydrolase 53 family.

The protein resides in the secreted. The enzyme catalyses The enzyme specifically hydrolyzes (1-&gt;4)-beta-D-galactosidic linkages in type I arabinogalactans.. Functionally, endogalactanase involved in the degradation of plant cell wall polysaccharides, and more particularly of hairy regions of pectin. This chain is Probable arabinogalactan endo-beta-1,4-galactanase A (galA), found in Aspergillus terreus (strain NIH 2624 / FGSC A1156).